Here is a 257-residue protein sequence, read N- to C-terminus: Aspartate/glutamate leucyltransferase (257 aa).

Belongs to the R-transferase family. Bpt subfamily.

The protein resides in the cytoplasm. It carries out the reaction N-terminal L-glutamyl-[protein] + L-leucyl-tRNA(Leu) = N-terminal L-leucyl-L-glutamyl-[protein] + tRNA(Leu) + H(+). The enzyme catalyses N-terminal L-aspartyl-[protein] + L-leucyl-tRNA(Leu) = N-terminal L-leucyl-L-aspartyl-[protein] + tRNA(Leu) + H(+). Functionally, functions in the N-end rule pathway of protein degradation where it conjugates Leu from its aminoacyl-tRNA to the N-termini of proteins containing an N-terminal aspartate or glutamate. This chain is Aspartate/glutamate leucyltransferase, found in Nitrobacter hamburgensis (strain DSM 10229 / NCIMB 13809 / X14).